The chain runs to 467 residues: Gamma-aminobutyric acid receptor subunit gamma-3 (467 aa).

Residues 1–17 form the signal peptide; the sequence is MAPKLLLLLCLFSGLHA. Topologically, residues 18–256 are extracellular; the sequence is RSRKVEEDEY…FELSRRMGYF (239 aa). An N-linked (GlcNAc...) asparagine glycan is attached at Asn110. Cys171 and Cys185 are oxidised to a cystine. Asn228 is a glycosylation site (N-linked (GlcNAc...) asparagine). A helical membrane pass occupies residues 257–277; the sequence is TIQTYIPCILTVVLSWVSFWI. The Cytoplasmic portion of the chain corresponds to 278–283; the sequence is KKDATP. The helical transmembrane segment at 284 to 303 threads the bilayer; that stretch reads ARTALGITTVLTMTTLSTIA. Topologically, residues 304–311 are extracellular; it reads RKSLPRVS. Residues 312–332 traverse the membrane as a helical segment; the sequence is YVTAMDLFVTVCFLFVFAALM. Residues 333-446 are Cytoplasmic-facing; the sequence is EYATLNYYSS…DILELDSYSR (114 aa). Residues 447-467 traverse the membrane as a helical segment; that stretch reads VFFPTSFLLFNLVYWVGYLYL.

Belongs to the ligand-gated ion channel (TC 1.A.9) family. Gamma-aminobutyric acid receptor (TC 1.A.9.5) subfamily. GABRG3 sub-subfamily. As to quaternary structure, heteropentamer, formed by a combination of alpha (GABRA1-6), beta (GABRB1-3), gamma (GABRG1-3), delta (GABRD), epsilon (GABRE), rho (GABRR1-3), pi (GABRP) and theta (GABRQ) chains, each subunit exhibiting distinct physiological and pharmacological properties. May be palmitoylated. As to expression, expressed in brain.

It localises to the postsynaptic cell membrane. Its subcellular location is the cell membrane. It catalyses the reaction chloride(in) = chloride(out). Gamma subunit of the heteropentameric ligand-gated chloride channel gated by gamma-aminobutyric acid (GABA), a major inhibitory neurotransmitter in the brain. GABA-gated chloride channels, also named GABA(A) receptors (GABAAR), consist of five subunits arranged around a central pore and contain GABA active binding site(s) located at the alpha and beta subunit interface(s). When activated by GABA, GABAARs selectively allow the flow of chloride across the cell membrane down their electrochemical gradient. The polypeptide is Gamma-aminobutyric acid receptor subunit gamma-3 (Homo sapiens (Human)).